The chain runs to 1033 residues: Isoleucine--tRNA ligase 2 (1033 aa).

The 'HIGH' region signature appears at 47-57 (PTANGLPHVGH). Residues 590 to 594 (KMSKS) carry the 'KMSKS' region motif. ATP is bound at residue lysine 593.

It belongs to the class-I aminoacyl-tRNA synthetase family. IleS type 2 subfamily. Monomer. The cofactor is Zn(2+).

The protein localises to the cytoplasm. The enzyme catalyses tRNA(Ile) + L-isoleucine + ATP = L-isoleucyl-tRNA(Ile) + AMP + diphosphate. In terms of biological role, catalyzes the attachment of isoleucine to tRNA(Ile). As IleRS can inadvertently accommodate and process structurally similar amino acids such as valine, to avoid such errors it has two additional distinct tRNA(Ile)-dependent editing activities. One activity is designated as 'pretransfer' editing and involves the hydrolysis of activated Val-AMP. The other activity is designated 'posttransfer' editing and involves deacylation of mischarged Val-tRNA(Ile). The protein is Isoleucine--tRNA ligase 2 of Bacillus cereus (strain ZK / E33L).